The following is a 340-amino-acid chain: 2-deoxy-scyllo-inosamine dehydrogenase (340 aa).

Cys37, His59, Cys89, Cys92, Cys95, Cys103, and Glu144 together coordinate Zn(2+).

It belongs to the zinc-containing alcohol dehydrogenase family. DOIA dehydrogenase subfamily. It depends on Zn(2+) as a cofactor.

The catalysed reaction is 2-deoxy-scyllo-inosamine + NADP(+) = 3-amino-2,3-dideoxy-scyllo-inosose + NADPH + H(+). It catalyses the reaction 2-deoxy-scyllo-inosamine + NAD(+) = 3-amino-2,3-dideoxy-scyllo-inosose + NADH + H(+). It participates in metabolic intermediate biosynthesis; 2-deoxystreptamine biosynthesis; 2-deoxystreptamine from D-glucose 6-phosphate: step 3/4. It functions in the pathway antibiotic biosynthesis; neomycin biosynthesis. Catalyzes the oxidation of 2-deoxy-scyllo-inosamine (DOIA) with NAD(+) or NADP(+), forming 3-amino-2,3-dideoxy-scyllo-inosose (amino-DOI). The chain is 2-deoxy-scyllo-inosamine dehydrogenase (neoA) from Streptomyces fradiae (Streptomyces roseoflavus).